A 209-amino-acid polypeptide reads, in one-letter code: Uracil phosphoribosyltransferase (209 aa).

5-phospho-alpha-D-ribose 1-diphosphate-binding positions include arginine 79, arginine 104, and 131–139 (DPMLATGGS). Residues isoleucine 194 and 199–201 (GDA) contribute to the uracil site. Aspartate 200 provides a ligand contact to 5-phospho-alpha-D-ribose 1-diphosphate.

Belongs to the UPRTase family. Requires Mg(2+) as cofactor.

The enzyme catalyses UMP + diphosphate = 5-phospho-alpha-D-ribose 1-diphosphate + uracil. It functions in the pathway pyrimidine metabolism; UMP biosynthesis via salvage pathway; UMP from uracil: step 1/1. With respect to regulation, allosterically activated by GTP. In terms of biological role, catalyzes the conversion of uracil and 5-phospho-alpha-D-ribose 1-diphosphate (PRPP) to UMP and diphosphate. This is Uracil phosphoribosyltransferase from Clostridium botulinum (strain Alaska E43 / Type E3).